The sequence spans 780 residues: ATP-dependent 6-phosphofructokinase, liver type (780 aa).

At alanine 2 the chain carries N-acetylalanine. The N-terminal catalytic PFK domain 1 stretch occupies residues 2 to 390 (AAVDLEKLRA…NWNIYKLLAH (389 aa)). ATP is bound by residues glycine 25, 88-89 (RC), and 118-121 (GDGS). Aspartate 119 lines the Mg(2+) pocket. Substrate-binding positions include 164–166 (SID), arginine 201, 208–210 (MGR), glutamate 264, arginine 292, and 298–301 (HVQR). Residue aspartate 166 is the Proton acceptor of the active site. Serine 377 bears the Phosphoserine mark. The interval 391 to 400 (QKPPKEKSNF) is interdomain linker. The interval 401 to 780 (SLAILNVGAP…RRTLSMDKGF (380 aa)) is C-terminal regulatory PFK domain 2. Residues arginine 470, 527-531 (TISNN), arginine 565, 572-574 (MGG), and glutamate 628 each bind beta-D-fructose 2,6-bisphosphate. The O-linked (GlcNAc) serine glycan is linked to serine 529. Tyrosine 640 carries the post-translational modification Phosphotyrosine. Residues arginine 654, 660–663 (HLQQ), and arginine 734 contribute to the beta-D-fructose 2,6-bisphosphate site. Serine 775 carries the post-translational modification Phosphoserine.

This sequence belongs to the phosphofructokinase type A (PFKA) family. ATP-dependent PFK group I subfamily. Eukaryotic two domain clade 'E' sub-subfamily. As to quaternary structure, homo- and heterotetramers. Phosphofructokinase (PFK) enzyme functions as a tetramer composed of different combinations of 3 types of subunits, called PFKM (M), PFKL (L) and PFKP (P). The composition of the PFK tetramer differs according to the tissue type it is present in. The kinetic and regulatory properties of the tetrameric enzyme are dependent on the subunit composition, hence can vary across tissues. The cofactor is Mg(2+). GlcNAcylation at Ser-529 by OGT decreases enzyme activity, leading to redirect glucose flux through the oxidative pentose phosphate pathway. Glycosylation is stimulated by both hypoxia and glucose deprivation.

It localises to the cytoplasm. The enzyme catalyses beta-D-fructose 6-phosphate + ATP = beta-D-fructose 1,6-bisphosphate + ADP + H(+). Its pathway is carbohydrate degradation; glycolysis; D-glyceraldehyde 3-phosphate and glycerone phosphate from D-glucose: step 3/4. Its activity is regulated as follows. Allosterically activated by ADP, AMP, or fructose 2,6-bisphosphate, and allosterically inhibited by ATP or citrate. GlcNAcylation by OGT overcomes allosteric regulation. In terms of biological role, catalyzes the phosphorylation of D-fructose 6-phosphate to fructose 1,6-bisphosphate by ATP, the first committing step of glycolysis. Negatively regulates the phagocyte oxidative burst in response to bacterial infection by controlling cellular NADPH biosynthesis and NADPH oxidase-derived reactive oxygen species. Upon macrophage activation, drives the metabolic switch toward glycolysis, thus preventing glucose turnover that produces NADPH via pentose phosphate pathway. The sequence is that of ATP-dependent 6-phosphofructokinase, liver type (PFKL) from Pongo abelii (Sumatran orangutan).